The following is a 920-amino-acid chain: Periplasmic nitrate reductase (920 aa).

A signal peptide (tat-type signal) is located at residues 1-29 (MNRRDFIKSTAAAAACASAGIALPANLNA). A 4Fe-4S Mo/W bis-MGD-type domain is found at 35-91 (WRWDKAVCRFCGTGCGIMVATKNGKIVAVKGDPEAPVNRGLNCIKGYFNAKIMYGDD). 4 residues coordinate [4Fe-4S] cluster: C42, C45, C49, and C77. Residues K79, Q147, N172, C176, 209 to 216 (WGANMAEM), M416, Q420, N526, 551 to 552 (SD), K574, D601, and 810 to 819 (TGRVLEHWHS) contribute to the Mo-bis(molybdopterin guanine dinucleotide) site. W886 provides a ligand contact to substrate. The Mo-bis(molybdopterin guanine dinucleotide) site is built by N894 and K911.

Belongs to the prokaryotic molybdopterin-containing oxidoreductase family. NasA/NapA/NarB subfamily. As to quaternary structure, component of the periplasmic nitrate reductase NapAB complex composed of NapA and NapB. The cofactor is [4Fe-4S] cluster. Mo-bis(molybdopterin guanine dinucleotide) is required as a cofactor. Predicted to be exported by the Tat system. The position of the signal peptide cleavage has not been experimentally proven.

The protein resides in the periplasm. The catalysed reaction is 2 Fe(II)-[cytochrome] + nitrate + 2 H(+) = 2 Fe(III)-[cytochrome] + nitrite + H2O. In terms of biological role, catalytic subunit of the periplasmic nitrate reductase complex NapAB. Receives electrons from NapB and catalyzes the reduction of nitrate to nitrite. This chain is Periplasmic nitrate reductase, found in Campylobacter hominis (strain ATCC BAA-381 / DSM 21671 / CCUG 45161 / LMG 19568 / NCTC 13146 / CH001A).